The chain runs to 112 residues: Protein Churchill (112 aa).

Positions 2, 5, 30, 33, 59, 61, 64, 66, 71, 88, and 91 each coordinate Zn(2+).

The protein belongs to the Churchill family.

In terms of biological role, transcriptional activator that mediates FGF signaling during neural development. Plays a role in the regulation of cell movement. Does not bind DNA by itself. This chain is Protein Churchill (CHURC1), found in Homo sapiens (Human).